The primary structure comprises 311 residues: Cytochrome c biogenesis protein CcsA (311 aa).

Helical transmembrane passes span 11–31, 44–64, 68–88, 101–121, 146–166, 217–237, 251–268, and 280–300; these read VLLL…LAFW, VVQL…LWRW, GHFP…GCTF, LVPA…SFAL, VIMM…AVLF, TITV…VWAN, TWAL…HTRL, and VAVS…LLGI.

Belongs to the CcmF/CycK/Ccl1/NrfE/CcsA family. As to quaternary structure, may interact with ccs1.

Its subcellular location is the cellular thylakoid membrane. Its function is as follows. Required during biogenesis of c-type cytochromes (cytochrome c6 and cytochrome f) at the step of heme attachment. The chain is Cytochrome c biogenesis protein CcsA from Synechococcus sp. (strain RCC307).